The chain runs to 454 residues: Ribosomal protein uS12 methylthiotransferase RimO (454 aa).

The region spanning 14-125 (SKVAFSHVGC…IAKVLDRVEK (112 aa)) is the MTTase N-terminal domain. The [4Fe-4S] cluster site is built by C23, C59, C88, C163, C167, and C170. Positions 149-378 (DKNKFVAYLR…ISVQQNISKD (230 aa)) constitute a Radical SAM core domain. The TRAM domain occupies 381–452 (QSYVGSKMKI…EYDLYGETLK (72 aa)).

It belongs to the methylthiotransferase family. RimO subfamily. [4Fe-4S] cluster serves as cofactor.

It localises to the cytoplasm. It catalyses the reaction L-aspartate(89)-[ribosomal protein uS12]-hydrogen + (sulfur carrier)-SH + AH2 + 2 S-adenosyl-L-methionine = 3-methylsulfanyl-L-aspartate(89)-[ribosomal protein uS12]-hydrogen + (sulfur carrier)-H + 5'-deoxyadenosine + L-methionine + A + S-adenosyl-L-homocysteine + 2 H(+). Catalyzes the methylthiolation of an aspartic acid residue of ribosomal protein uS12. This chain is Ribosomal protein uS12 methylthiotransferase RimO, found in Prochlorococcus marinus (strain MIT 9215).